Consider the following 213-residue polypeptide: Phosphate-specific transport system accessory protein PhoU homolog 2 (213 aa).

Belongs to the PhoU family. In terms of assembly, homodimer.

The protein resides in the cytoplasm. Functionally, plays a role in the regulation of phosphate uptake. In this role, it may bind, possibly as a chaperone, to PhoR, PhoP or a PhoR-PhoP complex to promote dephosphorylation of phospho-PhoP, or inhibit formation of the PhoR-PhoP transitory complex. The sequence is that of Phosphate-specific transport system accessory protein PhoU homolog 2 (phoU2) from Mycobacterium bovis (strain ATCC BAA-935 / AF2122/97).